We begin with the raw amino-acid sequence, 645 residues long: Sodium/hydrogen exchanger 9 (645 aa).

The Lumenal portion of the chain corresponds to 1 to 20; sequence MERQSRVMSEKDEYQFQHQG. A helical membrane pass occupies residues 21-41; that stretch reads AVELLVFNFLLILTILTIWLF. Over 42–45 the chain is Cytoplasmic; sequence KNHR. A helical membrane pass occupies residues 46–66; that stretch reads FRFLHETGGAMVYGLIMGLIL. Over 67 to 126 the chain is Lumenal; sequence RYATAPTDIESGTVYDCVKLTFSPSTLLVNITDQVYEYKYKREISQHNINPHQGNAILEK. An N-linked (GlcNAc...) asparagine glycan is attached at N96. A helical membrane pass occupies residues 127–147; the sequence is MTFDPEIFFNVLLPPIIFHAG. The Cytoplasmic segment spans residues 148–164; the sequence is YSLKKRHFFQNLGSILT. A helical transmembrane segment spans residues 165–185; sequence YAFLGTAISCIVIGLIMYGFV. Over 186 to 203 the chain is Lumenal; that stretch reads KAMIHAGQLKNGDFHFTD. A helical membrane pass occupies residues 204-224; the sequence is CLFFGSLMSATDPVTVLAIFH. Residues 225–235 lie on the Cytoplasmic side of the membrane; that stretch reads ELHVDPDLYTL. A helical membrane pass occupies residues 236–256; the sequence is LFGESVLNDAVAIVLTYSISI. Residues 257–277 are Lumenal-facing; the sequence is YSPKENPNAFDAAAFFQSVGN. A helical transmembrane segment spans residues 278–298; sequence FLGIFAGSFAMGSAYAIITAL. The Cytoplasmic portion of the chain corresponds to 299-301; it reads LTK. 2 helical membrane passes run 302 to 322 and 323 to 343; these read FTKL…LSWS and AFLS…FCGV. The Cytoplasmic segment spans residues 344–364; the sequence is TQAHYTYNNLSSDSKIRTKQL. The helical transmembrane segment at 365–385 threads the bilayer; sequence FEFMNFLAENVIFCYMGLALF. Position 386 (T386) is a topological domain, lumenal. Residues 387–407 form a helical membrane-spanning segment; the sequence is FQNHIFNALFILGAFLAIFVA. The Cytoplasmic portion of the chain corresponds to 408-429; that stretch reads RACNIYPLSFLLNLGRKQKIPW. Residues 430–450 traverse the membrane as a helical segment; sequence NFQHMMMFSGLRGAIAFALAI. The Lumenal portion of the chain corresponds to 451 to 465; that stretch reads RNTESQPKQMMFTTT. Residues 466 to 486 traverse the membrane as a helical segment; the sequence is LLLVFFTVWVFGGGTTPMLTW. The Cytoplasmic portion of the chain corresponds to 487–645; sequence LQIRVGVDLD…EQTLGQSQLN (159 aa). Positions 594 to 622 are disordered; that stretch reads QASSPCSPPARLGLDQKASPQTPGKENIY.

This sequence belongs to the monovalent cation:proton antiporter 1 (CPA1) transporter (TC 2.A.36) family. As to quaternary structure, homodimer; phosphatidylinositol-4,5-bisphosphate (PIP2) and phosphatidylinositol 3,4,5-trisphosphate (PIP3) could be involved in the dimer stabilization. Interacts (via the C-terminus) with RACK1. Interacts with CHP1. In terms of tissue distribution, ubiquitously expressed in all tissues tested. Expressed at highest levels in heart and skeletal muscle, followed by placenta, kidney, and liver. Expressed in the brain, in the medulla and spinal cord.

It is found in the late endosome membrane. It localises to the early endosome membrane. The protein resides in the recycling endosome membrane. The protein localises to the cell membrane. Its subcellular location is the cytoplasmic vesicle. It is found in the phagosome membrane. It carries out the reaction Na(+)(in) + H(+)(out) = Na(+)(out) + H(+)(in). The enzyme catalyses K(+)(in) + H(+)(out) = K(+)(out) + H(+)(in). In terms of biological role, endosomal Na(+), K(+)/H(+) antiporter. Mediates the electroneutral exchange of endosomal luminal H(+) for a cytosolic Na(+) or K(+). By facilitating proton efflux, SLC9A9 counteracts the acidity generated by vacuolar (V)-ATPase, thereby limiting luminal acidification. Regulates organellar pH and consequently, e.g., endosome maturation and endocytic trafficking of plasma membrane receptors and neurotransporters. Promotes the recycling of transferrin receptors back to the cell surface to facilitate additional iron uptake in the brain. Regulates synaptic transmission by regulating the luminal pH of axonal endosomes. Regulates phagosome lumenal pH, thus affecting phagosome maturation, and consequently, microbicidal activity in macrophages. Can also be active at the cell surface of specialized cells, e.g., in the inner ear hair bundles uses the high K(+) of the endolymph to regulate intracelular pH. This chain is Sodium/hydrogen exchanger 9, found in Homo sapiens (Human).